A 292-amino-acid polypeptide reads, in one-letter code: MKYRKFIILVLSILIILPVSTLDGHHIANADDDSPKKLKYKENSALALNYHRVRKANFLNNFIYFFSSSKEIKNYSVSQSQFESQIKWLKSHDAKFLTLKEFLYYKKKGKFPKRSVWINFDDMDETIYENAYPILKKYKIPATGFIITGHVGEENFHNLDMISKKELKEMYKTGLWEFETHTHDLHNLSKNNKSKLMKASEATIIKDLNKSEKYLTKNFKKSQKTIAYPYGLMNDDKLPVIKKAGLKYGFSLEEKAVTPNSNDYYIPRILISDDAFEHLIKRWDGFHEKDET.

The signal sequence occupies residues 1-28; that stretch reads MKYRKFIILVLSILIILPVSTLDGHHIA. Positions 114–292 constitute a NodB homology domain; that stretch reads RSVWINFDDM…WDGFHEKDET (179 aa).

This sequence belongs to the polysaccharide deacetylase family.

Its subcellular location is the secreted. The protein resides in the cell wall. In terms of biological role, catalyzes the N-deacetylation of poly-beta-1,6-N-acetyl-D-glucosamine (PNAG, also referred to as PIA), a biofilm adhesin polysaccharide. N-deacetylation is crucial for attachment of the polysaccharide to the bacterial cell surface; it leads to the introduction of positive charges in the otherwise neutral PIA polymer, allowing electrostatic interactions. In Staphylococcus aureus (strain COL), this protein is Poly-beta-1,6-N-acetyl-D-glucosamine N-deacetylase (icaB).